We begin with the raw amino-acid sequence, 83 residues long: Exodeoxyribonuclease 7 small subunit (83 aa).

A disordered region spans residues 63 to 83; sequence VQNDDGTTGTEPLADTGESGR.

The protein belongs to the XseB family. In terms of assembly, heterooligomer composed of large and small subunits.

The protein localises to the cytoplasm. The enzyme catalyses Exonucleolytic cleavage in either 5'- to 3'- or 3'- to 5'-direction to yield nucleoside 5'-phosphates.. Its function is as follows. Bidirectionally degrades single-stranded DNA into large acid-insoluble oligonucleotides, which are then degraded further into small acid-soluble oligonucleotides. The polypeptide is Exodeoxyribonuclease 7 small subunit (Gluconobacter oxydans (strain 621H) (Gluconobacter suboxydans)).